We begin with the raw amino-acid sequence, 84 residues long: Cell division topological specificity factor (84 aa).

This sequence belongs to the MinE family.

Functionally, prevents the cell division inhibition by proteins MinC and MinD at internal division sites while permitting inhibition at polar sites. This ensures cell division at the proper site by restricting the formation of a division septum at the midpoint of the long axis of the cell. The sequence is that of Cell division topological specificity factor from Ralstonia pickettii (strain 12J).